Reading from the N-terminus, the 716-residue chain is Ubiquitin thioesterase zranb1-B (716 aa).

2 RanBP2-type zinc fingers span residues 3–33 and 82–111; these read DLGL…QRHN and TSSK…QRQQ. Residues C10, C13, C24, C27, C88, C91, C102, and C105 each coordinate Zn(2+). Positions 113–143 are disordered; that stretch reads SQQHSPLSPSETPQTSGSRPSPVTSDPCEEY. The segment covering 118–136 has biased composition (polar residues); the sequence is PLSPSETPQTSGSRPSPVT. Residues 152–181 form a RanBP2-type 3 zinc finger; it reads HAQRWPCSACTYENWPKSLRCVVCDHPKPS. Zn(2+) is bound by residues C158, C161, C172, and C175. Positions 178-228 are disordered; the sequence is PKPSGSPETPQQDSEAESATSPSIVNEQERENVRTAGGGGGGSRGRLRKLS. Polar residues predominate over residues 183-203; that stretch reads SPETPQQDSEAESATSPSIVN. ANK repeat units lie at residues 268 to 298 and 321 to 348; these read RRSD…SGGD and FTLV…QQTA. Positions 440-600 constitute an OTU domain; the sequence is LYALWNRTAG…RGHFSALVAM (161 aa). C451 functions as the Nucleophile in the catalytic mechanism. H593 functions as the Proton acceptor in the catalytic mechanism.

It belongs to the peptidase C64 family.

It localises to the cytoplasm. The protein localises to the nucleus. The catalysed reaction is Thiol-dependent hydrolysis of ester, thioester, amide, peptide and isopeptide bonds formed by the C-terminal Gly of ubiquitin (a 76-residue protein attached to proteins as an intracellular targeting signal).. Ubiquitin thioesterase, which specifically hydrolyzes 'Lys-29'-linked and 'Lys-33'-linked diubiquitin. Also cleaves 'Lys-63'-linked chains, but with 40-fold less efficiency compared to 'Lys-29'-linked ones. Positive regulator of the Wnt signaling pathway that deubiquitinates apc protein, a negative regulator of Wnt-mediated transcription. Acts as a regulator of autophagy by mediating deubiquitination of pik3c3/vps34, thereby promoting autophagosome maturation. Plays a role in the regulation of cell morphology and cytoskeletal organization. Required in the stress fiber dynamics and cell migration. The chain is Ubiquitin thioesterase zranb1-B (zranb1b) from Danio rerio (Zebrafish).